The primary structure comprises 801 residues: Protein SDA1 homolog (801 aa).

Disordered regions lie at residues 1 to 40 (MGKV…ASRF), 495 to 517 (RKDR…FARP), 536 to 647 (GEQG…SKNS), and 739 to 801 (DYKF…RKPQ). Residues 24 to 40 (KSNAPTEGSNSGKASRF) show a composition bias toward polar residues. Composition is skewed to acidic residues over residues 544–568 (DGTD…DADE) and 583–633 (NDAE…EASE). Composition is skewed to basic residues over residues 770–779 (NKIRGRNRQR) and 787–801 (SLRH…RKPQ).

The protein belongs to the SDA1 family.

The protein resides in the nucleus. In terms of biological role, required for 60S pre-ribosomal subunits export to the cytoplasm. Required for normal somatic gonad development and for regulation of germline development and proliferation. The protein is Protein SDA1 homolog (pro-3) of Caenorhabditis elegans.